The sequence spans 247 residues: Probable transcriptional regulatory protein DvMF_3201 (247 aa).

A disordered region spans residues 1–21 (MAGHSKWANIQHRKGRQDAKR).

Belongs to the TACO1 family.

The protein resides in the cytoplasm. The sequence is that of Probable transcriptional regulatory protein DvMF_3201 from Nitratidesulfovibrio vulgaris (strain DSM 19637 / Miyazaki F) (Desulfovibrio vulgaris).